The following is a 569-amino-acid chain: MEQTWDSYISSLNQNSLPRQVEVTQGRYSGSLENLSFSKGDIITVVDLEPVFVRAELKDGDQVLDVVTIPLRYEGNFQLMADPVSFETVADLTRSVRLPQSPVAPRSPPRFQNSIPISADNLPMKLRKGETLSLIGFQESRGRRLLQCKVLRKKPPLTVLLPMDCRGHFLECQDDRFYSIDTIVRWKMLAGRKRTVRVQARHHPKLLGPLVPEHFRGHLVLYPCFSVTANLLGETRVSIPSDLDISVTEIARLDRKPRTTMRQIYSMEESKFPVRVKIMNVVQSESKEYPKPLKRGQLLTILKTEEVKKFVASEISQGKKGKCFLVPYTYQGLVLRRGRYFYAVSDVAAAMKHGELCFQASQDYTSYLGSFASFRANECFLALKKSVVSAEIHGELHRVEVLKCLNIATKAHVKLPLFAVGKFLELFDGARPGTLQELCQVTRLPCHVRVTSPDPSMTVDPLYGTKELRIENVIIEQCLIAKDEPTLEDIISSADMYREWPETTFEIPIEKISCEVLVVEERSWIADVRKERCRPLQSIQEVTKESLAFSNCLVIRRPPPPVPKPRSLF.

CABIT regions lie at residues 1-254 and 255-523; these read MEQT…ARLD and RKPR…EERS.

Belongs to the themis family. As to expression, specifically expressed in the intestine.

The protein is Protein THEMIS3 (Themis3) of Mus musculus (Mouse).